The chain runs to 122 residues: Large ribosomal subunit protein bL19 (122 aa).

This sequence belongs to the bacterial ribosomal protein bL19 family.

Its function is as follows. This protein is located at the 30S-50S ribosomal subunit interface and may play a role in the structure and function of the aminoacyl-tRNA binding site. In Acinetobacter baumannii (strain AB307-0294), this protein is Large ribosomal subunit protein bL19.